Consider the following 950-residue polypeptide: Bifunctional glutamine synthetase adenylyltransferase/adenylyl-removing enzyme (950 aa).

The tract at residues 1 to 443 is adenylyl removase; the sequence is MSLPSPLIPV…VFVTLIGDEE (443 aa). The adenylyl transferase stretch occupies residues 450–950; it reads ERHFNELWDM…WQEWLESSTI (501 aa).

It belongs to the GlnE family. The cofactor is Mg(2+).

The enzyme catalyses [glutamine synthetase]-O(4)-(5'-adenylyl)-L-tyrosine + phosphate = [glutamine synthetase]-L-tyrosine + ADP. It catalyses the reaction [glutamine synthetase]-L-tyrosine + ATP = [glutamine synthetase]-O(4)-(5'-adenylyl)-L-tyrosine + diphosphate. Functionally, involved in the regulation of glutamine synthetase GlnA, a key enzyme in the process to assimilate ammonia. When cellular nitrogen levels are high, the C-terminal adenylyl transferase (AT) inactivates GlnA by covalent transfer of an adenylyl group from ATP to specific tyrosine residue of GlnA, thus reducing its activity. Conversely, when nitrogen levels are low, the N-terminal adenylyl removase (AR) activates GlnA by removing the adenylyl group by phosphorolysis, increasing its activity. The regulatory region of GlnE binds the signal transduction protein PII (GlnB) which indicates the nitrogen status of the cell. In Vibrio vulnificus (strain CMCP6), this protein is Bifunctional glutamine synthetase adenylyltransferase/adenylyl-removing enzyme.